The chain runs to 428 residues: Serine--tRNA ligase (428 aa).

L-serine is bound at residue 231 to 233; that stretch reads TSE. ATP contacts are provided by residues 262-264 and valine 278; that span reads RRE. Glutamate 285 is an L-serine binding site. 349 to 352 serves as a coordination point for ATP; it reads ELTS. Residue threonine 384 participates in L-serine binding.

This sequence belongs to the class-II aminoacyl-tRNA synthetase family. Type-1 seryl-tRNA synthetase subfamily. As to quaternary structure, homodimer. The tRNA molecule binds across the dimer.

It localises to the cytoplasm. The catalysed reaction is tRNA(Ser) + L-serine + ATP = L-seryl-tRNA(Ser) + AMP + diphosphate + H(+). It catalyses the reaction tRNA(Sec) + L-serine + ATP = L-seryl-tRNA(Sec) + AMP + diphosphate + H(+). Its pathway is aminoacyl-tRNA biosynthesis; selenocysteinyl-tRNA(Sec) biosynthesis; L-seryl-tRNA(Sec) from L-serine and tRNA(Sec): step 1/1. Functionally, catalyzes the attachment of serine to tRNA(Ser). Is also able to aminoacylate tRNA(Sec) with serine, to form the misacylated tRNA L-seryl-tRNA(Sec), which will be further converted into selenocysteinyl-tRNA(Sec). This chain is Serine--tRNA ligase, found in Bifidobacterium longum (strain DJO10A).